We begin with the raw amino-acid sequence, 289 residues long: Pantothenate synthetase (289 aa).

33-40 (MGNLHDGH) provides a ligand contact to ATP. The active-site Proton donor is His-40. Gln-64 provides a ligand contact to (R)-pantoate. Gln-64 is a beta-alanine binding site. 155–158 (GKKD) lines the ATP pocket. Gln-161 is a (R)-pantoate binding site. ATP contacts are provided by residues Ala-184 and 192 to 195 (LSSR).

Belongs to the pantothenate synthetase family. In terms of assembly, homodimer.

It localises to the cytoplasm. The enzyme catalyses (R)-pantoate + beta-alanine + ATP = (R)-pantothenate + AMP + diphosphate + H(+). Its pathway is cofactor biosynthesis; (R)-pantothenate biosynthesis; (R)-pantothenate from (R)-pantoate and beta-alanine: step 1/1. Catalyzes the condensation of pantoate with beta-alanine in an ATP-dependent reaction via a pantoyl-adenylate intermediate. This chain is Pantothenate synthetase, found in Acidovorax sp. (strain JS42).